The primary structure comprises 617 residues: MAALPRGSRGLPLLPLLLLLPPLGGPRGADGYFPEERWSPESPLQAPRVLIALLARNAAPALPATLGALEQLRHPRERTALWVATDHNTDNTSAILREWLVAVKGLYHSVEWRPAEEPSSYPDEEGPKHWSDSRYEHVMKLRQAALKSARDMWADYILFMDIDNLITNPDTLSLLIAENKTVVAPMLDSRAAYSNFWCGMTSQGYYKRTPAYIPIRKRDRRGCFAVPMVHSTFLIDLRKAASRNLAFYPTHPDYTWSFDDIIVFAFSCKQAEVQMYVCNKEVYGFLPVPLRAHSSLQDEAESFMHVQLEVMVKHPPVQLSRFISAPRKTSDKMGFDEVFMINLKRRRDRRERMLRALHEQEIDCQLVEAVDGKAMNTSQVEAMGIQMLPGYRDPYHGRPLTKGELGCFLSHYNIWKEVVDRGLQKSLVFEDDLRFEIFFKRRLMNLMRDVEREGLDWDLIYVGRKRMQVEHPEKAVPHVRNLVEADYSYWTLAYVISLQGAQKLLAAKPLAKMLPVDEFLPVMFDKHPMSEYKSHFSPRNLRAFSVEPLLIYPTHYTGDDGYVSDTETSVVWNNEQVKTDWDRAKSQKMREQQALSREAKNSDVLQSPLDSTARDEL.

The N-terminal stretch at 1-31 (MAALPRGSRGLPLLPLLLLLPPLGGPRGADG) is a signal peptide. Residues N91, N179, and N376 are each glycosylated (N-linked (GlcNAc...) asparagine). A compositionally biased stretch (basic and acidic residues) spans 582 to 601 (DRAKSQKMREQQALSREAKN). Positions 582–617 (DRAKSQKMREQQALSREAKNSDVLQSPLDSTARDEL) are disordered. Positions 614–617 (RDEL) match the Prevents secretion from ER motif.

It belongs to the glycosyltransferase 25 family. N-glycosylated.

It localises to the endoplasmic reticulum lumen. The enzyme catalyses (5R)-5-hydroxy-L-lysyl-[collagen] + UDP-alpha-D-galactose = (5R)-5-O-(beta-D-galactosyl)-5-hydroxy-L-lysyl-[collagen] + UDP + H(+). Functionally, beta-galactosyltransferase that transfers beta-galactose to hydroxylysine residues of type I collagen. By acting on collagen glycosylation, facilitates the formation of collagen triple helix. Also involved in the biosynthesis of collagen type IV. The protein is Procollagen galactosyltransferase 1 (Colgalt1) of Mus musculus (Mouse).